The primary structure comprises 274 residues: Penicillin-insensitive murein endopeptidase (274 aa).

The N-terminal stretch at Met1–Ala19 is a signal peptide. 3 disulfide bridges follow: Cys44/Cys265, Cys187/Cys235, and Cys216/Cys223. Zn(2+) contacts are provided by His110, His113, Asp120, Asp147, His150, and His211. Residues Pro227–Ile274 form a disordered region.

This sequence belongs to the peptidase M74 family. In terms of assembly, dimer. Requires Zn(2+) as cofactor.

The protein localises to the periplasm. Functionally, murein endopeptidase that cleaves the D-alanyl-meso-2,6-diamino-pimelyl amide bond that connects peptidoglycan strands. Likely plays a role in the removal of murein from the sacculus. The sequence is that of Penicillin-insensitive murein endopeptidase from Shigella dysenteriae serotype 1 (strain Sd197).